The following is a 509-amino-acid chain: Protein Jade-1 (509 aa).

The segment at 1–45 (MKRGRLPSSSEDSDDNGSLSTTWSQNSRSQHRRSSCSRPEDRKPS) is disordered. An interaction with KAT7/HBO1 and histones region spans residues 60 to 80 (DSYQLNPDEYYVLADPWRQEW). The interaction with histones stretch occupies residues 80–188 (WEKGVQVPVS…EQRCYDNMNH (109 aa)). Ser89 carries the post-translational modification Phosphoserine. Thr92 is subject to Phosphothreonine. Residue Lys114 forms a Glycyl lysine isopeptide (Lys-Gly) (interchain with G-Cter in SUMO2) linkage. The PHD-type 1 zinc finger occupies 203–253 (YVVCDVCQSPDGEDGNEMVFCDKCNICVHQACYGILKVPEGSWLCRTCALG). Residues 255–289 (QPKCLLCPKKGGAMKPTRSGTKWVHVSCALWIPEV) form a C2HC pre-PHD-type zinc finger. Residues 313-369 (LVCSLCNEKFGASIQCSVKNCRTAFHVTCAFDRGLEMKTILAENDEVKFKSYCPKHS) form a PHD-type 2 zinc finger. The interval 373–399 (KAEEGLGEGTAQENGAPECSPRDPLEP) is disordered.

The protein belongs to the JADE family. Component of the HBO1 complex composed at least of ING4 or ING5, KAT7/HBO1, MEAF6, and one of JADE1, JADE2 and JADE3. Interacts with NPHP4.

The protein resides in the nucleus. Its subcellular location is the chromosome. It localises to the cytoplasm. The protein localises to the cytoskeleton. It is found in the cilium basal body. Its function is as follows. Scaffold subunit of some HBO1 complexes, which have a histone H4 acetyltransferase activity. Plays a key role in HBO1 complex by directing KAT7/HBO1 specificity towards histone H4 acetylation (H4K5ac, H4K8ac and H4K12ac), regulating DNA replication initiation, regulating DNA replication initiation. May also promote acetylation of nucleosomal histone H4 by KAT5. Promotes apoptosis. May act as a renal tumor suppressor. Negatively regulates canonical Wnt signaling; at least in part, cooperates with NPHP4 in this function. The sequence is that of Protein Jade-1 (JADE1) from Bos taurus (Bovine).